A 688-amino-acid chain; its full sequence is Elongation factor G 2 (688 aa).

Residues 7 to 282 (DSIRNIGIIS…AVAAYLPSPR (276 aa)) enclose the tr-type G domain. GTP is bound by residues 16–23 (SHIDAGKT), 80–84 (DTPGH), and 134–137 (NKMD).

Belongs to the TRAFAC class translation factor GTPase superfamily. Classic translation factor GTPase family. EF-G/EF-2 subfamily.

The protein resides in the cytoplasm. Catalyzes the GTP-dependent ribosomal translocation step during translation elongation. During this step, the ribosome changes from the pre-translocational (PRE) to the post-translocational (POST) state as the newly formed A-site-bound peptidyl-tRNA and P-site-bound deacylated tRNA move to the P and E sites, respectively. Catalyzes the coordinated movement of the two tRNA molecules, the mRNA and conformational changes in the ribosome. This is Elongation factor G 2 from Geobacter metallireducens (strain ATCC 53774 / DSM 7210 / GS-15).